The following is a 596-amino-acid chain: Chaperone protein DnaK (596 aa).

T174 is subject to Phosphothreonine; by autocatalysis. A disordered region spans residues A576–E596.

This sequence belongs to the heat shock protein 70 family.

Functionally, acts as a chaperone. This is Chaperone protein DnaK from Mycoplasmopsis synoviae (strain 53) (Mycoplasma synoviae).